The chain runs to 150 residues: Putative HTH-type transcriptional regulator rrf2-like (150 aa).

The HTH rrf2-type domain occupies 1–139 (MITQKMKYAL…DSLTLEDMLA (139 aa)).

The protein is Putative HTH-type transcriptional regulator rrf2-like of Rhodobacter capsulatus (strain ATCC BAA-309 / NBRC 16581 / SB1003).